The sequence spans 215 residues: ATP-dependent dethiobiotin synthetase BioD (215 aa).

13–18 lines the ATP pocket; it reads DIGKTV. Threonine 17 is a binding site for Mg(2+). The active site involves lysine 38. Threonine 42 provides a ligand contact to substrate. Residues aspartate 50, 115 to 118, and 175 to 176 each bind ATP; these read EGAG and NH. The Mg(2+) site is built by aspartate 50 and glutamate 115.

This sequence belongs to the dethiobiotin synthetase family. Homodimer. Requires Mg(2+) as cofactor.

It localises to the cytoplasm. The enzyme catalyses (7R,8S)-7,8-diammoniononanoate + CO2 + ATP = (4R,5S)-dethiobiotin + ADP + phosphate + 3 H(+). It functions in the pathway cofactor biosynthesis; biotin biosynthesis; biotin from 7,8-diaminononanoate: step 1/2. Catalyzes a mechanistically unusual reaction, the ATP-dependent insertion of CO2 between the N7 and N8 nitrogen atoms of 7,8-diaminopelargonic acid (DAPA, also called 7,8-diammoniononanoate) to form a ureido ring. In Neisseria meningitidis serogroup C (strain 053442), this protein is ATP-dependent dethiobiotin synthetase BioD.